The primary structure comprises 336 residues: USG-1 protein homolog (336 aa).

Belongs to the aspartate-semialdehyde dehydrogenase family.

The protein is USG-1 protein homolog (usg) of Pseudomonas aeruginosa (strain ATCC 15692 / DSM 22644 / CIP 104116 / JCM 14847 / LMG 12228 / 1C / PRS 101 / PAO1).